We begin with the raw amino-acid sequence, 463 residues long: Aromatic amino acid transport protein AroP (463 aa).

12 helical membrane passes run 18 to 38 (TMMG…GVGI), 40 to 60 (AAGP…VLVM), 84 to 104 (FGHW…IMVM), 117 to 137 (AWFG…FAVV), 157 to 177 (VAVI…WLPG), 200 to 220 (VAAG…VTIA), 237 to 257 (AVIW…TFLM), 276 to 296 (ILAM…IVLA), 337 to 357 (AVLL…WNPA), 358 to 378 (GLLD…WAMI), 402 to 422 (AHPW…ALML), and 431 to 451 (VYSV…TVNS).

The protein belongs to the amino acid-polyamine-organocation (APC) superfamily. Amino acid transporter (AAT) (TC 2.A.3.1) family.

Its subcellular location is the cell membrane. It catalyses the reaction L-phenylalanine(in) + H(+)(in) = L-phenylalanine(out) + H(+)(out). It carries out the reaction L-tryptophan(in) + H(+)(in) = L-tryptophan(out) + H(+)(out). The enzyme catalyses L-tyrosine(in) + H(+)(in) = L-tyrosine(out) + H(+)(out). Permease that is involved in the active transport across the cytoplasmic membrane of all three aromatic amino acids, phenylalanine, tyrosine and tryptophan. The polypeptide is Aromatic amino acid transport protein AroP (Corynebacterium glutamicum (strain ATCC 13032 / DSM 20300 / JCM 1318 / BCRC 11384 / CCUG 27702 / LMG 3730 / NBRC 12168 / NCIMB 10025 / NRRL B-2784 / 534)).